A 230-amino-acid chain; its full sequence is Transcriptional regulatory protein CitT (230 aa).

Residues 6 to 124 (KVLIIEDDFR…VLHQRLDAYV (119 aa)) form the Response regulatory domain. 4-aspartylphosphate is present on D59. A DNA-binding region (H-T-H motif) is located at residues 184 to 203 (AMEGARLIGASRSTVRRYFE).

Phosphorylated by CitS.

It localises to the cytoplasm. Functionally, member of the two-component regulatory system CitT/CitS. The protein is Transcriptional regulatory protein CitT (citT) of Halalkalibacterium halodurans (strain ATCC BAA-125 / DSM 18197 / FERM 7344 / JCM 9153 / C-125) (Bacillus halodurans).